Here is a 692-residue protein sequence, read N- to C-terminus: DNA ligase (692 aa).

NAD(+) is bound by residues 35 to 39 (DLVYD), 88 to 89 (SL), and glutamate 117. Lysine 119 functions as the N6-AMP-lysine intermediate in the catalytic mechanism. Residues arginine 140, glutamate 176, lysine 301, and lysine 325 each coordinate NAD(+). Residues cysteine 416, cysteine 419, cysteine 434, and cysteine 439 each coordinate Zn(2+). The BRCT domain occupies 611 to 692 (LTNQSNSWAS…FDLIKNSKKT (82 aa)).

The protein belongs to the NAD-dependent DNA ligase family. LigA subfamily. Mg(2+) is required as a cofactor. Mn(2+) serves as cofactor.

It catalyses the reaction NAD(+) + (deoxyribonucleotide)n-3'-hydroxyl + 5'-phospho-(deoxyribonucleotide)m = (deoxyribonucleotide)n+m + AMP + beta-nicotinamide D-nucleotide.. Its function is as follows. DNA ligase that catalyzes the formation of phosphodiester linkages between 5'-phosphoryl and 3'-hydroxyl groups in double-stranded DNA using NAD as a coenzyme and as the energy source for the reaction. It is essential for DNA replication and repair of damaged DNA. This chain is DNA ligase, found in Mesomycoplasma hyopneumoniae (strain 7448) (Mycoplasma hyopneumoniae).